Here is a 152-residue protein sequence, read N- to C-terminus: Superoxide dismutase [Cu-Zn] 2 (152 aa).

Residues N9 and N33 are each glycosylated (N-linked (GlcNAc...) asparagine). Residues H45, H47, and H62 each coordinate Cu cation. C56 and C145 are joined by a disulfide. The Zn(2+) site is built by H62, H70, H79, and D82. Residue N85 is glycosylated (N-linked (GlcNAc...) asparagine). Cu cation is bound at residue H119.

It belongs to the Cu-Zn superoxide dismutase family. Requires Cu cation as cofactor. Zn(2+) is required as a cofactor. Expressed in fruits, leaves and pollen grains.

It localises to the cytoplasm. Its subcellular location is the endoplasmic reticulum. It catalyses the reaction 2 superoxide + 2 H(+) = H2O2 + O2. With respect to regulation, inhibited by KCN and H(2)O(2). Functionally, destroys radicals which are normally produced within the cells and which are toxic to biological systems. Probably involved in the protection against oxidative stress during pollen development. This chain is Superoxide dismutase [Cu-Zn] 2 (OLE5), found in Olea europaea (Common olive).